A 107-amino-acid chain; its full sequence is Polyketide synthase CurG (107 aa).

Its pathway is antibiotic biosynthesis; curamycin biosynthesis. The sequence is that of Polyketide synthase CurG (curG) from Streptomyces cyaneus (Streptomyces curacoi).